We begin with the raw amino-acid sequence, 149 residues long: Putative pre-16S rRNA nuclease (149 aa).

It belongs to the YqgF nuclease family.

Its subcellular location is the cytoplasm. Could be a nuclease involved in processing of the 5'-end of pre-16S rRNA. The sequence is that of Putative pre-16S rRNA nuclease from Burkholderia lata (strain ATCC 17760 / DSM 23089 / LMG 22485 / NCIMB 9086 / R18194 / 383).